We begin with the raw amino-acid sequence, 235 residues long: Phosphoribosylaminoimidazole-succinocarboxamide synthase (235 aa).

The protein belongs to the SAICAR synthetase family.

The catalysed reaction is 5-amino-1-(5-phospho-D-ribosyl)imidazole-4-carboxylate + L-aspartate + ATP = (2S)-2-[5-amino-1-(5-phospho-beta-D-ribosyl)imidazole-4-carboxamido]succinate + ADP + phosphate + 2 H(+). It functions in the pathway purine metabolism; IMP biosynthesis via de novo pathway; 5-amino-1-(5-phospho-D-ribosyl)imidazole-4-carboxamide from 5-amino-1-(5-phospho-D-ribosyl)imidazole-4-carboxylate: step 1/2. In Clostridium perfringens (strain 13 / Type A), this protein is Phosphoribosylaminoimidazole-succinocarboxamide synthase.